A 124-amino-acid polypeptide reads, in one-letter code: Small ribosomal subunit protein uS12 (124 aa).

D90 is modified (3-methylthioaspartic acid).

It belongs to the universal ribosomal protein uS12 family. In terms of assembly, part of the 30S ribosomal subunit. Contacts proteins S8 and S17. May interact with IF1 in the 30S initiation complex.

Functionally, with S4 and S5 plays an important role in translational accuracy. Interacts with and stabilizes bases of the 16S rRNA that are involved in tRNA selection in the A site and with the mRNA backbone. Located at the interface of the 30S and 50S subunits, it traverses the body of the 30S subunit contacting proteins on the other side and probably holding the rRNA structure together. The combined cluster of proteins S8, S12 and S17 appears to hold together the shoulder and platform of the 30S subunit. This is Small ribosomal subunit protein uS12 from Wolbachia pipientis subsp. Culex pipiens (strain wPip).